Here is a 306-residue protein sequence, read N- to C-terminus: Acetylglutamate kinase (306 aa).

Substrate contacts are provided by residues 75–76, R97, and N197; that span reads GG.

This sequence belongs to the acetylglutamate kinase family. ArgB subfamily.

It localises to the cytoplasm. The catalysed reaction is N-acetyl-L-glutamate + ATP = N-acetyl-L-glutamyl 5-phosphate + ADP. Its pathway is amino-acid biosynthesis; L-arginine biosynthesis; N(2)-acetyl-L-ornithine from L-glutamate: step 2/4. Its function is as follows. Catalyzes the ATP-dependent phosphorylation of N-acetyl-L-glutamate. The protein is Acetylglutamate kinase of Streptomyces coelicolor (strain ATCC BAA-471 / A3(2) / M145).